A 262-amino-acid chain; its full sequence is ATP synthase subunit a (262 aa).

5 consecutive transmembrane segments (helical) span residues 24–44 (AVHLDTLFFSLVAGVLFLVVF), 85–105 (IAPLALTIFCWVFIMNAIDLV), 129–149 (DISATLGMSICVFGLILFYTV), 194–214 (LFGNMYAGELIFILIAVMYMA), and 228–248 (LVWAIFHILVITLQAFIFMML).

The protein belongs to the ATPase A chain family. F-type ATPases have 2 components, CF(1) - the catalytic core - and CF(0) - the membrane proton channel. CF(1) has five subunits: alpha(3), beta(3), gamma(1), delta(1), epsilon(1). CF(0) has three main subunits: a(1), b(2) and c(9-12). The alpha and beta chains form an alternating ring which encloses part of the gamma chain. CF(1) is attached to CF(0) by a central stalk formed by the gamma and epsilon chains, while a peripheral stalk is formed by the delta and b chains.

Its subcellular location is the cell inner membrane. In terms of biological role, key component of the proton channel; it plays a direct role in the translocation of protons across the membrane. This chain is ATP synthase subunit a, found in Haemophilus ducreyi (strain 35000HP / ATCC 700724).